The following is a 269-amino-acid chain: 4-hydroxy-tetrahydrodipicolinate reductase (269 aa).

NAD(+) is bound by residues 13–18 and D39; that span reads GASGRM. R40 provides a ligand contact to NADP(+). NAD(+) contacts are provided by residues 101-103 and 125-128; these read GTT and APNM. The Proton donor/acceptor role is filled by H158. H159 contributes to the (S)-2,3,4,5-tetrahydrodipicolinate binding site. K162 (proton donor) is an active-site residue. 168 to 169 lines the (S)-2,3,4,5-tetrahydrodipicolinate pocket; the sequence is GT.

This sequence belongs to the DapB family.

The protein resides in the cytoplasm. The catalysed reaction is (S)-2,3,4,5-tetrahydrodipicolinate + NAD(+) + H2O = (2S,4S)-4-hydroxy-2,3,4,5-tetrahydrodipicolinate + NADH + H(+). It carries out the reaction (S)-2,3,4,5-tetrahydrodipicolinate + NADP(+) + H2O = (2S,4S)-4-hydroxy-2,3,4,5-tetrahydrodipicolinate + NADPH + H(+). Its pathway is amino-acid biosynthesis; L-lysine biosynthesis via DAP pathway; (S)-tetrahydrodipicolinate from L-aspartate: step 4/4. Catalyzes the conversion of 4-hydroxy-tetrahydrodipicolinate (HTPA) to tetrahydrodipicolinate. The polypeptide is 4-hydroxy-tetrahydrodipicolinate reductase (Bordetella bronchiseptica (strain ATCC BAA-588 / NCTC 13252 / RB50) (Alcaligenes bronchisepticus)).